Here is a 477-residue protein sequence, read N- to C-terminus: Ribulose bisphosphate carboxylase large chain (477 aa).

The propeptide occupies 1–2 (MS). Pro3 carries the post-translational modification N-acetylproline. Lys14 is subject to N6,N6,N6-trimethyllysine. Residues Asn123 and Thr173 each coordinate substrate. The active-site Proton acceptor is the Lys175. Lys177 is a substrate binding site. The Mg(2+) site is built by Lys201, Asp203, and Glu204. Lys201 is modified (N6-carboxylysine). The active-site Proton acceptor is the His294. Residues Arg295, His327, and Ser379 each coordinate substrate.

It belongs to the RuBisCO large chain family. Type I subfamily. Heterohexadecamer of 8 large chains and 8 small chains; disulfide-linked. The disulfide link is formed within the large subunit homodimers. Mg(2+) is required as a cofactor. In terms of processing, the disulfide bond which can form in the large chain dimeric partners within the hexadecamer appears to be associated with oxidative stress and protein turnover.

The protein localises to the plastid. The protein resides in the chloroplast. The enzyme catalyses 2 (2R)-3-phosphoglycerate + 2 H(+) = D-ribulose 1,5-bisphosphate + CO2 + H2O. It carries out the reaction D-ribulose 1,5-bisphosphate + O2 = 2-phosphoglycolate + (2R)-3-phosphoglycerate + 2 H(+). RuBisCO catalyzes two reactions: the carboxylation of D-ribulose 1,5-bisphosphate, the primary event in carbon dioxide fixation, as well as the oxidative fragmentation of the pentose substrate in the photorespiration process. Both reactions occur simultaneously and in competition at the same active site. The sequence is that of Ribulose bisphosphate carboxylase large chain from Solanum bulbocastanum (Wild potato).